The following is a 495-amino-acid chain: Oxidoreductase AflY (495 aa).

A disordered region spans residues 1-22; it reads MGSHAPAVAGKPDPKKGPYQAT.

The protein belongs to the questin oxidase family.

The protein operates within mycotoxin biosynthesis; aflatoxin biosynthesis. Its function is as follows. Oxidoreductase; part of the gene cluster that mediates the biosynthesis of aflatoxins, a group of polyketide-derived furanocoumarins, and part of the most toxic and carcinogenic compounds among the known mycotoxins. The four major aflatoxins produced by A.parasiticus are aflatoxin B1 (AFB1), aflatoxin B2 (AFB2), aflatoxin G1 (AFG1) and aflatoxin G2 (AFG2). Within the aflatoxin pathway, the oxidoreductase aflY seems to be involved in the conversion of versicolorin A (VERA) to demethylsterigmatocystin (DMST), through probable Baeyer-Villiger oxidation required for the formation of the xanthone ring. The biosynthesis of aflatoxins begins with the norsolorinic acid synthase aflC that combines a hexanoyl starter unit produced by the fatty acid synthase aflA/aflB and 7 malonyl-CoA extender units to synthesize the precursor NOR. The second step is the conversion of NOR to averantin and requires the norsolorinic acid ketoreductase aflD, which catalyzes the dehydration of norsolorinic acid to form (1'S)-averantin. The norsolorinic acid reductases aflE and aflF may also play a role in the conversion of NOR to AVN. The cytochrome P450 monooxygenase aflG then catalyzes the hydroxylation of AVN to 5'hydroxyaverantin (HAVN). The next step is performed by the 5'-hydroxyaverantin dehydrogenase aflH that transforms HAVN to 5'-oxoaverantin (OAVN) which is further converted to averufin (AVF) by aflK that plays a dual role in the pathway, as a 5'-oxoaverantin cyclase that mediates conversion of 5'-oxoaverantin, as well as a versicolorin B synthase in a later step in the pathway. The averufin oxidase aflI catalyzes the conversion of AVF to versiconal hemiacetal acetate (VHA). VHA is then the substrate for the versiconal hemiacetal acetate esterase aflJ to yield versiconal (VAL). Versicolorin B synthase aflK then converts VAL to versicolorin B (VERB) by closing the bisfuran ring of aflatoxin which is required for DNA-binding, thus giving to aflatoxin its activity as a mutagen. Then, the activity of the versicolorin B desaturase aflL leads to versicolorin A (VERA). A branch point starts from VERB since it can also be converted to dihydrodemethylsterigmatocystin (DMDHST), probably also by aflL, VERA being a precursor for aflatoxins B1 and G1, and DMDHST for aflatoxins B2 and G2. Next, the versicolorin reductase aflM and the cytochrome P450 monooxygenase aflN are involved in conversion of VERA to demethylsterigmatocystin (DMST). AflX and aflY seem also involved in this step, through probable aflX-mediated epoxide ring-opening step following versicolorin A oxidation and aflY-mediated Baeyer-Villiger oxidation required for the formation of the xanthone ring. The methyltransferase aflO then leads to the modification of DMST to sterigmatocystin (ST), and of DMDHST to dihydrosterigmatocystin (DHST). Both ST and DHST are then substrates of the O-methyltransferase aflP to yield O-methylsterigmatocystin (OMST) and dihydro-O-methylsterigmatocystin (DHOMST), respectively. Finally OMST is converted to aflatoxins B1 and G1, and DHOMST to aflatoxins B2 and G2, via the action of several enzymes including O-methylsterigmatocystin oxidoreductase aflQ, the cytochrome P450 monooxygenase aflU, but also the NADH-dependent flavin oxidoreductase nadA which is specifically required for the synthesis of AFG1. In Aspergillus parasiticus (strain ATCC 56775 / NRRL 5862 / SRRC 143 / SU-1), this protein is Oxidoreductase AflY.